The chain runs to 52 residues: Troponin C, skeletal muscle (52 aa).

EF-hand domains lie at 2–37 and 38–52; these read KSEE…SGEH and VTDE…DGDK. 5 residues coordinate Ca(2+): aspartate 15, asparagine 17, aspartate 19, tyrosine 21, and glutamate 26.

It belongs to the troponin C family.

Troponin is the central regulatory protein of striated muscle contraction. Tn consists of three components: Tn-I which is the inhibitor of actomyosin ATPase, Tn-T which contains the binding site for tropomyosin and Tn-C. The binding of calcium to Tn-C abolishes the inhibitory action of Tn on actin filaments. This Protopterus dolloi (Slender lungfish) protein is Troponin C, skeletal muscle.